The following is an 848-amino-acid chain: Protein NETWORKED 2C (848 aa).

In terms of domain architecture, NAB spans 10-90 (YSWWWASHVR…ERYDHISKEL (81 aa)). The interval 108-141 (FAMNEDDDDDAPVSPRHHKNKTSNKNVPKVPDLP) is disordered. Coiled coils occupy residues 172 to 204 (LSKT…SYEN), 241 to 278 (EAQI…SRKQ), 305 to 454 (SEKE…KATN), and 752 to 797 (AKFE…SEEF).

This sequence belongs to the NET family.

Plant-specific actin binding protein. May be part of a membrane-cytoskeletal adapter complex. The protein is Protein NETWORKED 2C of Arabidopsis thaliana (Mouse-ear cress).